Here is a 278-residue protein sequence, read N- to C-terminus: MGNTIRAFVAFIPADRCQNYVARDLREMPLDRMVDLSGSQLRRFPVHVCSFQELVKLYLSDNRLNSLPPELGQLQNLQILALDFNNFKALPQVVCTLKQLCILYLGNNKLCDLPRELSLLQNLRTLWVEANYLTKLPEVVCELSLLKTLHAGSNALRLLPGQLQRLRELRTIWLSGNLLTDFPPVLLHMPFLEIIDVDRNSIRYFPSLAHLSSLKLVIYDHNPCRNAPKVAKGVRRVGRWAEETPEPDPRKARRYALAREESQEAQLPALPPLPPTNS.

LRR repeat units lie at residues 30 to 51 (LDRM…VCSF), 52 to 74 (QELV…LGQL), 76 to 97 (NLQI…VCTL), 98 to 121 (KQLC…SLLQ), 123 to 143 (LRTL…VCEL), 144 to 166 (SLLK…LQRL), 167 to 189 (RELR…LLHM), and 191 to 213 (FLEI…HLSS). Residues 239-250 (RWAEETPEPDPR) are compositionally biased toward basic and acidic residues. The segment at 239–278 (RWAEETPEPDPRKARRYALAREESQEAQLPALPPLPPTNS) is disordered. The span at 269–278 (ALPPLPPTNS) shows a compositional bias: pro residues.

The protein resides in the nucleus. Its function is as follows. May play important roles in cardiac development and/or cardiac function. The protein is Leucine-rich repeat-containing protein 10 (LRRC10) of Bos taurus (Bovine).